A 214-amino-acid chain; its full sequence is Probable transaldolase (214 aa).

Lys83 (schiff-base intermediate with substrate) is an active-site residue.

Belongs to the transaldolase family. Type 3B subfamily.

Its subcellular location is the cytoplasm. It catalyses the reaction D-sedoheptulose 7-phosphate + D-glyceraldehyde 3-phosphate = D-erythrose 4-phosphate + beta-D-fructose 6-phosphate. It participates in carbohydrate degradation; pentose phosphate pathway; D-glyceraldehyde 3-phosphate and beta-D-fructose 6-phosphate from D-ribose 5-phosphate and D-xylulose 5-phosphate (non-oxidative stage): step 2/3. Transaldolase is important for the balance of metabolites in the pentose-phosphate pathway. This chain is Probable transaldolase, found in Geobacter metallireducens (strain ATCC 53774 / DSM 7210 / GS-15).